Consider the following 107-residue polypeptide: MTKSELIASLKADNPHLTERDVETIVSTIFDEISNALARGARVELRGFGAFTIKRRDARVGRNPRTGETVSVDEKVVPFFKAGKELRERVNNGTRKNGGSADAASGG.

The disordered stretch occupies residues 87-107 (RERVNNGTRKNGGSADAASGG).

This sequence belongs to the bacterial histone-like protein family. In terms of assembly, heterodimer of an alpha and a beta chain.

Its function is as follows. This protein is one of the two subunits of integration host factor, a specific DNA-binding protein that functions in genetic recombination as well as in transcriptional and translational control. The chain is Integration host factor subunit beta from Granulibacter bethesdensis (strain ATCC BAA-1260 / CGDNIH1).